The chain runs to 248 residues: MEADAPAGYRDPSGRHGAVTLPARPEPIAFDADATVLIVVDMQNAYATKGGYLDLAGFDVSATGPVIERIARAVAAARAAGIRVVWFQNGWDPDYVEAGGPGSPNWHKSNALKTMRRRPEMNQRLLAKGTWDYALVDALTPEPGDIVLPKPRYSGFYNTPLDSMLRARGIRTLVFTGIATNVCVESTLRDGYHREYFGIVLADATHQAGPPALQEGALRNIETFFGWVSDVAAFEAALSSDEARRIPA.

Asp-41 acts as the Proton acceptor in catalysis. Lys-150 is an active-site residue. Cys-183 (nucleophile) is an active-site residue.

This sequence belongs to the isochorismatase family. RutB subfamily.

The catalysed reaction is (Z)-3-ureidoacrylate + H2O + H(+) = (Z)-3-aminoacrylate + NH4(+) + CO2. The enzyme catalyses (Z)-3-ureidoacrylate + H2O = (Z)-3-aminoacrylate + carbamate + H(+). It carries out the reaction (Z)-2-methylureidoacrylate + H2O + H(+) = (Z)-2-methylaminoacrylate + NH4(+) + CO2. Functionally, hydrolyzes ureidoacrylate to form aminoacrylate and carbamate. The carbamate hydrolyzes spontaneously, thereby releasing one of the nitrogen atoms of the pyrimidine ring as ammonia and one of its carbon atoms as CO2. The sequence is that of Ureidoacrylate amidohydrolase RutB from Methylorubrum extorquens (strain DSM 6343 / CIP 106787 / DM4) (Methylobacterium extorquens).